Consider the following 786-residue polypeptide: Kazrin-A (786 aa).

The segment at 44–70 is disordered; sequence EEPGEPQEHQQQQQQQNHQDAPVQRQK. The segment covering 52–62 has biased composition (low complexity); the sequence is HQQQQQQQNHQ. A coiled-coil region spans residues 92 to 270; that stretch reads LLHEEVLRLQ…SLATLTKDVP (179 aa). The disordered stretch occupies residues 350 to 425; the sequence is MSDASVMEGE…LFDDSDSLSS (76 aa). 3 SAM domains span residues 457-522, 535-599, and 623-686; these read WRAG…YRDA, DHHW…LHTL, and WTCQ…SEEM. Residues 703 to 760 are disordered; the sequence is PLGTPPTLHRQSSLSSSSPSCHDDQQSLRRVKQQLGLSPKNLTARNISHQSRSGSFPR. A compositionally biased stretch (polar residues) spans 742–758; it reads KNLTARNISHQSRSGSF.

The protein belongs to the kazrin family.

In Danio rerio (Zebrafish), this protein is Kazrin-A (kazna).